The sequence spans 223 residues: Small ribosomal subunit protein uS3 (223 aa).

The 69-residue stretch at 39 to 107 (VREFLKQKLK…PVQVSVEEIR (69 aa)) folds into the KH type-2 domain.

The protein belongs to the universal ribosomal protein uS3 family. Part of the 30S ribosomal subunit. Forms a tight complex with proteins S10 and S14.

Its function is as follows. Binds the lower part of the 30S subunit head. Binds mRNA in the 70S ribosome, positioning it for translation. In Methylococcus capsulatus (strain ATCC 33009 / NCIMB 11132 / Bath), this protein is Small ribosomal subunit protein uS3.